Reading from the N-terminus, the 171-residue chain is Ribosome maturation factor RimM (171 aa).

In terms of domain architecture, PRC barrel spans 97 to 170 (KLNYFSWDHY…IIYMKLPVGL (74 aa)).

Belongs to the RimM family. As to quaternary structure, binds ribosomal protein uS19.

It localises to the cytoplasm. Its function is as follows. An accessory protein needed during the final step in the assembly of 30S ribosomal subunit, possibly for assembly of the head region. Essential for efficient processing of 16S rRNA. May be needed both before and after RbfA during the maturation of 16S rRNA. It has affinity for free ribosomal 30S subunits but not for 70S ribosomes. The chain is Ribosome maturation factor RimM from Azobacteroides pseudotrichonymphae genomovar. CFP2.